The following is a 334-amino-acid chain: Zinc-finger homeodomain protein 10 (334 aa).

A compositionally biased stretch (low complexity) spans 1 to 15 (MMDMTPTITTTTTPT). Disordered regions lie at residues 1 to 33 (MMDMTPTITTTTTPTPKSPEPESETPTRIQPAK) and 103 to 164 (FHRR…LLSL). The ZF-HD dimerization-type; degenerate zinc finger occupies 56–107 (YKECLKNHAAALGGHALDGCGEFMPSPSSISSDPTSLKCAACGCHRNFHRRD). Residues 136-155 (PPPPPPPPPRSPNSASPPPI) show a composition bias toward pro residues. Positions 200–263 (RKRFRTKFSQ…NNKNTFNRRD (64 aa)) form a DNA-binding region, homeobox. The disordered stretch occupies residues 292-334 (NGHHGVGGGGELHQSVSSGGGGGGFDSDSGGANGGNVNGSSSS). Residues 309 to 328 (SGGGGGGFDSDSGGANGGNV) are compositionally biased toward gly residues.

In terms of assembly, homo- and heterodimer with other ZFHD proteins. Interacts with MIF1, MIF2 and MIF3; these interactions prevent nuclear localization and DNA-binding to inhibit transcription regulation activity. Binds to ZHD1, ZHD2, ZHD4, ZHD5, ZHD6, ZHD7 and ZHD8. Interacts with KIN10 and KIN11. In terms of tissue distribution, mostly expressed in rosettes (e.g. young leaves), flowers (e.g. styles), siliques and inflorescence.

Its subcellular location is the nucleus. Its function is as follows. Putative transcription factor. Probably involved in establishing polarity during leaf development through the gibberellic acid (GA) signaling pathway. In Arabidopsis thaliana (Mouse-ear cress), this protein is Zinc-finger homeodomain protein 10 (ZHD10).